The primary structure comprises 77 residues: UPF0349 protein lmo2392 (77 aa).

The protein belongs to the UPF0349 family.

This is UPF0349 protein lmo2392 from Listeria monocytogenes serovar 1/2a (strain ATCC BAA-679 / EGD-e).